An 89-amino-acid chain; its full sequence is Small ribosomal subunit protein bS16c (89 aa).

This sequence belongs to the bacterial ribosomal protein bS16 family.

Its subcellular location is the plastid. It localises to the chloroplast. The chain is Small ribosomal subunit protein bS16c from Morus indica (Mulberry).